The following is a 337-amino-acid chain: Bifunctional methylenetetrahydrofolate dehydrogenase/cyclohydrolase, mitochondrial (337 aa).

The N-terminal 30 residues, 1–30 (MATALCPLRALGQTAFRPRTRRLHLSAPRA), are a transit peptide targeting the mitochondrion. Substrate-binding positions include 79–83 (YVLNK) and 126–128 (VQL). Residues 195-197 (GRS) and Arg-228 each bind NAD(+). Residue 304-308 (PGGVG) participates in substrate binding.

It belongs to the tetrahydrofolate dehydrogenase/cyclohydrolase family. The cofactor is Mg(2+).

The protein localises to the mitochondrion. The catalysed reaction is (6R)-5,10-methylene-5,6,7,8-tetrahydrofolate + NAD(+) = (6R)-5,10-methenyltetrahydrofolate + NADH. It carries out the reaction (6R)-5,10-methenyltetrahydrofolate + H2O = (6R)-10-formyltetrahydrofolate + H(+). Although its dehydrogenase activity is NAD-specific, it can also utilize NADP at a reduced efficiency. In Gallus gallus (Chicken), this protein is Bifunctional methylenetetrahydrofolate dehydrogenase/cyclohydrolase, mitochondrial (MTHFD2).